The sequence spans 173 residues: ATP-dependent protease subunit HslV (173 aa).

Residue Thr-2 is part of the active site. Gly-158, Asp-161, and Ser-164 together coordinate Na(+).

The protein belongs to the peptidase T1B family. HslV subfamily. A double ring-shaped homohexamer of HslV is capped on each side by a ring-shaped HslU homohexamer. The assembly of the HslU/HslV complex is dependent on binding of ATP.

Its subcellular location is the cytoplasm. The catalysed reaction is ATP-dependent cleavage of peptide bonds with broad specificity.. Its activity is regulated as follows. Allosterically activated by HslU binding. Protease subunit of a proteasome-like degradation complex believed to be a general protein degrading machinery. The sequence is that of ATP-dependent protease subunit HslV from Haemophilus ducreyi (strain 35000HP / ATCC 700724).